A 346-amino-acid polypeptide reads, in one-letter code: Nitrilase 3 (346 aa).

Position 2 is an N-acetylserine (Ser2). The CN hydrolase domain occupies 25-297 (VRVTIVQSST…EGLVTADLDL (273 aa)). Catalysis depends on Glu65, which acts as the Proton acceptor. Lys152 functions as the Proton donor in the catalytic mechanism. Residue Cys186 is the Nucleophile of the active site.

The protein belongs to the carbon-nitrogen hydrolase superfamily. Nitrilase family.

It is found in the cell membrane. The enzyme catalyses a nitrile + 2 H2O = a carboxylate + NH4(+). Can convert indole-3-acetonitrile to the plant hormone indole-3-acetic acid. This is Nitrilase 3 (NIT3) from Arabidopsis thaliana (Mouse-ear cress).